Reading from the N-terminus, the 269-residue chain is Protein OPG079 (269 aa).

It belongs to the orthopoxvirus OPG079 family. Homoomultimer (Potential). Interacts with the small subunit of ribonucleotide reductase. Interacts with host FAM111A; this interaction protomtes OPG079 degradation through autophagy.

The protein localises to the host cytoplasm. In terms of biological role, plays an essential role in viral DNA replication. Binds to ssDNA with high affinity and localizes to cytoplasmic factories where nascent viral genomes accumulate. May disrupt loops, hairpins and other secondary structures present on ssDNA to reduce and eliminate pausing of viral DNA polymerase at specific sites during elongation. The chain is Protein OPG079 (OPG079) from Variola virus (isolate Human/India/Ind3/1967) (VARV).